The chain runs to 422 residues: Beta-1,3-galactosyltransferase 2 (422 aa).

Topologically, residues 1 to 24 (MLQWRRRHCCFAKMTWNAKRSLFR) are cytoplasmic. Residues 25–45 (THLIGVLSLVFLFAMFLFFNH) traverse the membrane as a helical; Signal-anchor for type II membrane protein segment. The Lumenal segment spans residues 46–422 (HDWLPGRAGF…AGRYRHRKLH (377 aa)). N-linked (GlcNAc...) asparagine glycosylation is found at N75, N100, N119, N176, and N226. Residues 90 to 110 (TLRPQTATNSNNTDLSPQGVT) form a disordered region.

This sequence belongs to the glycosyltransferase 31 family. Mn(2+) is required as a cofactor.

The protein localises to the golgi apparatus membrane. The catalysed reaction is an N-acetyl-beta-D-glucosaminyl derivative + UDP-alpha-D-galactose = a beta-D-galactosyl-(1-&gt;3)-N-acetyl-beta-D-glucosaminyl derivative + UDP + H(+). The enzyme catalyses a beta-D-GlcNAc-(1-&gt;3)-beta-D-Gal-(1-&gt;4)-beta-D-Glc-(1&lt;-&gt;1)-Cer(d18:1(4E)) + UDP-alpha-D-galactose = a beta-D-Gal-(1-&gt;3)-beta-D-GlcNAc-(1-&gt;3)-beta-D-Gal-(1-&gt;4)-beta-D-Glc-(1&lt;-&gt;1')-Cer(d18:1(4E)) + UDP + H(+). It catalyses the reaction a neolactoside IV(3)-beta-GlcNAc-nLc4Cer(d18:1(4E)) + UDP-alpha-D-galactose = a neolactoside IV(3)-beta-[Gal-beta-(1-&gt;3)-GlcNAc]-nLc4Cer(d18:1(4E)) + UDP + H(+). Its pathway is protein modification; protein glycosylation. Functionally, beta-1,3-galactosyltransferase that transfers galactose from UDP-galactose to substrates with a terminal beta-N-acetylglucosamine (beta-GlcNAc) residue. Can also utilize substrates with a terminal galactose residue, albeit with lower efficiency. Involved in the biosynthesis of the carbohydrate moieties of glycolipids and glycoproteins. Inactive towards substrates with terminal alpha-N-acetylglucosamine (alpha-GlcNAc) or alpha-N-acetylgalactosamine (alpha-GalNAc) residues. The polypeptide is Beta-1,3-galactosyltransferase 2 (B3GALT2) (Pongo abelii (Sumatran orangutan)).